The following is a 1070-amino-acid chain: DNA-directed RNA polymerase subunit beta (1070 aa).

The protein belongs to the RNA polymerase beta chain family. In terms of assembly, in plastids the minimal PEP RNA polymerase catalytic core is composed of four subunits: alpha, beta, beta', and beta''. When a (nuclear-encoded) sigma factor is associated with the core the holoenzyme is formed, which can initiate transcription.

It is found in the plastid. Its subcellular location is the chloroplast. The catalysed reaction is RNA(n) + a ribonucleoside 5'-triphosphate = RNA(n+1) + diphosphate. DNA-dependent RNA polymerase catalyzes the transcription of DNA into RNA using the four ribonucleoside triphosphates as substrates. This Solanum tuberosum (Potato) protein is DNA-directed RNA polymerase subunit beta.